The chain runs to 534 residues: Capsid scaffolding protein (534 aa).

Active-site charge relay system residues include His-46, Ser-114, and His-134. An interaction with pAP region spans residues 253–272 (EDIISIPKSAFLSMLQSSID). The Nuclear localization signal signature appears at 336–342 (RTGKRKR). Disordered regions lie at residues 337 to 356 (TGKRKRGAEDDEGHLFPGEE) and 466 to 524 (GAPP…KIRK). Residues 479–491 (QSIQQQAPETTHT) are compositionally biased toward polar residues. Positions 514-534 (SRSSPKSKIRKMFCEELLNKQ) are interaction with major capsid protein.

Belongs to the herpesviridae capsid scaffolding protein family. In terms of assembly, homomultimer. Interacts with major capsid protein. As to quaternary structure, exists in a monomer-dimer equilibrium with the dimer being the active species. Post-translationally, capsid scaffolding protein is cleaved by assemblin after formation of the spherical procapsid. As a result, the capsid obtains its mature, icosahedral shape. Cleavages occur at two or more sites: release (R-site) and maturation (M-site).

It localises to the host cytoplasm. The protein resides in the host nucleus. It catalyses the reaction Cleaves -Ala-|-Ser- and -Ala-|-Ala- bonds in the scaffold protein.. Its function is as follows. Acts as a scaffold protein by binding major capsid protein in the cytoplasm, inducing the nuclear localization of both proteins. Multimerizes in the nucleus such as major capsid protein forms the icosahedral T=16 capsid. Autocatalytic cleavage releases the assembly protein, and subsequently abolishes interaction with major capsid protein. Cleavages products are evicted from the capsid before or during DNA packaging. In terms of biological role, protease that plays an essential role in virion assembly within the nucleus. Catalyzes the cleavage of the assembly protein after formation of the spherical procapsid. By that cleavage, the capsid matures and gains its icosahedral shape. The cleavage sites seem to include -Ala-Ser-, -Ala-Ala-, as well as Ala-Thr bonds. Assemblin and cleavages products are evicted from the capsid before or during DNA packaging. Functionally, plays a major role in capsid assembly. Acts as a scaffold protein by binding major capsid protein. Multimerizes in the nucleus such as major capsid protein forms the icosahedral T=16 capsid. Cleaved by assemblin after capsid completion. The cleavages products are evicted from the capsid before or during DNA packaging. The polypeptide is Capsid scaffolding protein (ORF17) (Human herpesvirus 8 type P (isolate GK18) (HHV-8)).